A 296-amino-acid chain; its full sequence is NAD kinase (296 aa).

Catalysis depends on D73, which acts as the Proton acceptor. NAD(+) contacts are provided by residues 73–74 (DG), K78, 151–152 (NE), R178, D180, and 191–196 (TAHAMS).

The protein belongs to the NAD kinase family. It depends on a divalent metal cation as a cofactor.

It is found in the cytoplasm. The catalysed reaction is NAD(+) + ATP = ADP + NADP(+) + H(+). Involved in the regulation of the intracellular balance of NAD and NADP, and is a key enzyme in the biosynthesis of NADP. Catalyzes specifically the phosphorylation on 2'-hydroxyl of the adenosine moiety of NAD to yield NADP. In Francisella tularensis subsp. mediasiatica (strain FSC147), this protein is NAD kinase.